The chain runs to 1316 residues: MAIVKRGGRTKTKQQQVPAKSSGGGSSGGIKKAEFDITKKKEVGVSDLTLLSKITDEAINENLHKRFMNDTIYTYIGHVLISVNPFRDLGIYTLENLNKYKGRNRLEVPPHVFAIAESMYYNLKSYGENQCVIISGESGAGKTEAAKQIMQYIANVSVNQDNVEISKIKDMVLATNPLLESFGCAKTLRNNNSSRHGKYLEIKFSEGNYQPIAAHITNYLLEKQRVVSQITNERNFHIFYQFTKHCPPQYQQMFGIQGPETYVYTSAAKCINVDGVDDAKDFQDTLNAMKIIGLTQQEQDNIFRMLASILWIGNISFVEDENGNAAIRDDSVTNFAAYLLDVNPEILKKAIIERTIETSHGMRRGSTYHSPLNIVQATAVRDALAKGIYNNLFEWIVERVNISLAGSQQQSSKSIGILDIYGFEIFERNSFEQICINYVNEKLQQIFIQLTLKAEQDEYVQEQIKWTPIDYFNNKVVCDLIEATRPQPGLFAALNDSIKTAHADSEAADQVFAQRLSMVGASNRHFEDRRGKFIIKHYAGDVTYDVAGMTDKNKDAMLRDLLELVSTSQNSFINQVLFPPDLLAQLTDSRKRPETASDKIKKSANILVDTLSQCTPSYIRTIKPNQTKKPRDYDNQQVLHQIKYLGLKENVRIRRAGFAYRSTFERFVQRFYLLSPATGYAGDYIWRGDDISAVKEILKSCHIPPSEYQLGTTKVFIKTPETLFALEDMRDKYWHNMAARIQRAWRRYVKRKEDAAKTIQNAWRIKKHGNQFEQFRDYGNGLLQGRKERRRMSMLGSRAFMGDYLGCNYKSGYGRFIINQVGINESVIFSSKGEILLSKFGRSSKRLPRIFIVTKTSIYIIAEVLVEKRLQLQKEFTIPISGINYLGLSTFQDNWVAISLHSPTPTTPDVFINLDFKTELVAQLKKLNPGITIKIGPTIEYQKKPGKFHTVKFIIGAGPEIPNNGDHYKSGTVSVKQGLPASSKNPKRPRGVSSKVDYSKYYNRGAARKTAAAAQATPRYNQPTPVANSGYSAQPAYPIPQQPQQYQPQQSQQQTPYPTQSSIPSVNQNQSRQPQRKVPPPAPSLQVSAAQAALGKSPTQQRQTPAHNPVASPNRPASTTIATTTSHTSRPVKKTAPAPPVKKTAPPPPPPTLVKPKFPTYKAMFDYDGSVAGSIPLVKDTVYYVTQVNGKWGLVKTMDETKEGWSPIDYLKECSPNETQKSAPPPPPPPPAATASAGANGASNPISTTTSTNTTTSSHTTNATSNGSLGNGLADALKAKKQEETTLAGSLADALKKRQGATRDSDDEEEEDDDDW.

Over residues 1 to 12 (MAIVKRGGRTKT) the composition is skewed to basic residues. A disordered region spans residues 1 to 29 (MAIVKRGGRTKTKQQQVPAKSSGGGSSGG). The Myosin motor domain occupies 43–731 (VGVSDLTLLS…TLFALEDMRD (689 aa)). 136–143 (GESGAGKT) serves as a coordination point for ATP. A Phosphoserine modification is found at serine 366. The segment at 414-497 (SIGILDIYGF…PGLFAALNDS (84 aa)) is actin-binding. 2 IQ domains span residues 735 to 755 (HNMA…KEDA) and 756 to 781 (AKTI…YGNG). Positions 789-981 (RRRMSMLGSR…TVSVKQGLPA (193 aa)) constitute a TH1 domain. 2 disordered regions span residues 964–1154 (NGDH…PTLV) and 1209–1316 (DYLK…DDDW). 2 stretches are compositionally biased toward polar residues: residues 971–984 (GTVS…ASSK) and 1018–1030 (PRYN…ANSG). A compositionally biased stretch (low complexity) spans 1042–1065 (QPQQYQPQQSQQQTPYPTQSSIPS). Positions 1097–1106 (SPTQQRQTPA) are enriched in polar residues. Over residues 1117 to 1129 (ASTTIATTTSHTS) the composition is skewed to low complexity. Positions 1137–1153 (PAPPVKKTAPPPPPPTL) are enriched in pro residues. The 61-residue stretch at 1156 to 1216 (PKFPTYKAMF…PIDYLKECSP (61 aa)) folds into the SH3 domain. The span at 1223 to 1232 (APPPPPPPPA) shows a compositional bias: pro residues. The span at 1233–1268 (ATASAGANGASNPISTTTSTNTTTSSHTTNATSNGS) shows a compositional bias: low complexity. A compositionally biased stretch (acidic residues) spans 1305 to 1316 (SDDEEEEDDDDW).

The protein belongs to the TRAFAC class myosin-kinesin ATPase superfamily. Myosin family. Post-translationally, phosphorylation of the TEDS site (Ser-366) is required for the polarization of the actin cytoskeleton. Phosphorylation probably activates the myosin-I ATPase activity.

Its subcellular location is the cytoplasm. It localises to the cytoskeleton. The protein localises to the actin patch. Its function is as follows. Type-I myosin implicated in the organization of the actin cytoskeleton. Required for proper actin cytoskeleton polarization and for the internalization step in endocytosis. At the cell cortex, assembles in patch-like structures together with proteins from the actin-polymerizing machinery and promotes actin assembly. Functions as actin nucleation-promoting factor (NPF) for the Arp2/3 complex. Plays a role in chitin deposition in the cell wall, in determination of the budding pattern, and is required for hyphae formation. The polypeptide is Myosin-5 (MYO5) (Candida albicans (strain SC5314 / ATCC MYA-2876) (Yeast)).